The following is a 527-amino-acid chain: Bifunctional purine biosynthesis protein PurH (527 aa).

An MGS-like domain is found at 1–149 (MTADLLPVRR…KNFARVAVAT (149 aa)).

This sequence belongs to the PurH family.

It carries out the reaction (6R)-10-formyltetrahydrofolate + 5-amino-1-(5-phospho-beta-D-ribosyl)imidazole-4-carboxamide = 5-formamido-1-(5-phospho-D-ribosyl)imidazole-4-carboxamide + (6S)-5,6,7,8-tetrahydrofolate. The enzyme catalyses IMP + H2O = 5-formamido-1-(5-phospho-D-ribosyl)imidazole-4-carboxamide. Its pathway is purine metabolism; IMP biosynthesis via de novo pathway; 5-formamido-1-(5-phospho-D-ribosyl)imidazole-4-carboxamide from 5-amino-1-(5-phospho-D-ribosyl)imidazole-4-carboxamide (10-formyl THF route): step 1/1. It functions in the pathway purine metabolism; IMP biosynthesis via de novo pathway; IMP from 5-formamido-1-(5-phospho-D-ribosyl)imidazole-4-carboxamide: step 1/1. In Stenotrophomonas maltophilia (strain R551-3), this protein is Bifunctional purine biosynthesis protein PurH.